The primary structure comprises 691 residues: MSRSTPLKKVRNIGIAAHIDAGKTTTSERILFFTGMSHKIGEVHDGAATMDWMEQEKERGITITSAATTCFWKDHQINLIDTPGHVDFTIEVERSMRVLDGAVAVFCSVGGVQPQSETVWRQANKYGVPRIVFVNKMDRIGANFYNVEDQIRNRLKANPVPLQIPIGAEDNFKGVIDLVTMKALVWEDDTKPTDYVEKEIPAELKEKAEEYRTKMIEAVSETSDELMEKYLGGEELSLEEIKTGIKAGCLSLSIVPMLCGTAFKNKGVQPLLDAVVAYLPAPDEVPNIKGEYEDGTEVSVKSTDDGEFAGLAFKIMTDPFVGQLTFVRVYRGCLESGSYAYNSTKDKKERIGRLLKMHSNKREEIKVLYAGEIGAVVGLKDTLTGDTLASEKDKVILERMDFPDPVISVAVEPKTKADQEKMSIALNKLAQEDPSFRVSTDEESGQTIISGMGELHLEIIVDRMLREFKVEAEVGQPQVAYRETIRKTVEQEYKYAKQSGGRGQYGHVFLRLEPLEPGSGYEFVNDIKGGVIPKEYIPAVDKGVQEALQNGVLAGYPVEDVKVTVYDGSYHEVDSSEMAFKLAASMGFKEGARKAGAVILEPMMKVEVETPEDYMGDVIGDLNKRRGQVNSMDERGGNKIITAFCPLAEMFGYSTDLRSQTQGRATYSMEFDHYDEVPKNVADEIIKKRNG.

Positions 8-283 (KKVRNIGIAA…AVVAYLPAPD (276 aa)) constitute a tr-type G domain. Residues 17 to 24 (AHIDAGKT), 81 to 85 (DTPGH), and 135 to 138 (NKMD) each bind GTP.

It belongs to the TRAFAC class translation factor GTPase superfamily. Classic translation factor GTPase family. EF-G/EF-2 subfamily.

It is found in the cytoplasm. Its function is as follows. Catalyzes the GTP-dependent ribosomal translocation step during translation elongation. During this step, the ribosome changes from the pre-translocational (PRE) to the post-translocational (POST) state as the newly formed A-site-bound peptidyl-tRNA and P-site-bound deacylated tRNA move to the P and E sites, respectively. Catalyzes the coordinated movement of the two tRNA molecules, the mRNA and conformational changes in the ribosome. This is Elongation factor G from Campylobacter jejuni subsp. jejuni serotype O:23/36 (strain 81-176).